The following is a 181-amino-acid chain: Ribosome maturation factor RimM (181 aa).

The PRC barrel domain maps to 99 to 172 (EDEFYQVDLI…FLIVDPMAAG (74 aa)).

Belongs to the RimM family. As to quaternary structure, binds ribosomal protein uS19.

The protein localises to the cytoplasm. Its function is as follows. An accessory protein needed during the final step in the assembly of 30S ribosomal subunit, possibly for assembly of the head region. Essential for efficient processing of 16S rRNA. May be needed both before and after RbfA during the maturation of 16S rRNA. It has affinity for free ribosomal 30S subunits but not for 70S ribosomes. This is Ribosome maturation factor RimM from Bartonella tribocorum (strain CIP 105476 / IBS 506).